We begin with the raw amino-acid sequence, 333 residues long: Tetraacyldisaccharide 4'-kinase (333 aa).

Position 60–67 (60–67 (TVGGTGKT)) interacts with ATP.

The protein belongs to the LpxK family.

It catalyses the reaction a lipid A disaccharide + ATP = a lipid IVA + ADP + H(+). It functions in the pathway glycolipid biosynthesis; lipid IV(A) biosynthesis; lipid IV(A) from (3R)-3-hydroxytetradecanoyl-[acyl-carrier-protein] and UDP-N-acetyl-alpha-D-glucosamine: step 6/6. Functionally, transfers the gamma-phosphate of ATP to the 4'-position of a tetraacyldisaccharide 1-phosphate intermediate (termed DS-1-P) to form tetraacyldisaccharide 1,4'-bis-phosphate (lipid IVA). The protein is Tetraacyldisaccharide 4'-kinase of Azotobacter vinelandii (strain DJ / ATCC BAA-1303).